The sequence spans 382 residues: Lipid-A-disaccharide synthase (382 aa).

This sequence belongs to the LpxB family.

It carries out the reaction a lipid X + a UDP-2-N,3-O-bis[(3R)-3-hydroxyacyl]-alpha-D-glucosamine = a lipid A disaccharide + UDP + H(+). It functions in the pathway bacterial outer membrane biogenesis; LPS lipid A biosynthesis. Functionally, condensation of UDP-2,3-diacylglucosamine and 2,3-diacylglucosamine-1-phosphate to form lipid A disaccharide, a precursor of lipid A, a phosphorylated glycolipid that anchors the lipopolysaccharide to the outer membrane of the cell. The sequence is that of Lipid-A-disaccharide synthase from Koribacter versatilis (strain Ellin345).